A 400-amino-acid polypeptide reads, in one-letter code: Tryptophan 2,3-dioxygenase (400 aa).

Substrate contacts are provided by residues 75-79 (FIIIH) and Arg146. A heme-binding site is contributed by His332. Thr346 is a substrate binding site.

This sequence belongs to the tryptophan 2,3-dioxygenase family. As to quaternary structure, homotetramer. Dimer of dimers. It depends on heme as a cofactor.

The catalysed reaction is L-tryptophan + O2 = N-formyl-L-kynurenine. Its pathway is amino-acid degradation; L-tryptophan degradation via kynurenine pathway; L-kynurenine from L-tryptophan: step 1/2. In terms of biological role, heme-dependent dioxygenase that catalyzes the oxidative cleavage of the L-tryptophan (L-Trp) pyrrole ring and converts L-tryptophan to N-formyl-L-kynurenine. Catalyzes the oxidative cleavage of the indole moiety. The sequence is that of Tryptophan 2,3-dioxygenase from Dictyostelium discoideum (Social amoeba).